We begin with the raw amino-acid sequence, 194 residues long: MNLMTTITGVVLAGGKARRMGGVDKGLLELNGKPLWQHVADALMTQLSHVVVNANRHQEIYQASGLKVIEDSLADYPGPLAGMLSVMQQEAGEWFLFCPCDTPYIPPDLAARLNHQRKDAPVVWVHDGERDHPTIALVNRAIEPLLLEYLQAGERRVMVFMRLAGGHAVDFSDHKDAFVNVNTPEELARWQEKR.

GTP-binding positions include 12-14, Lys-25, Asn-53, Asp-71, and Asp-101; that span reads LAG. Mg(2+) is bound at residue Asp-101.

This sequence belongs to the MobA family. As to quaternary structure, monomer. An equilibrium exists between a monomeric and oligomeric form of the enzyme, which could be an octamer; whether this oligomeric arrangement is of functional relevance is unclear. Interacts with MoeA and MobB in vivo. Mg(2+) is required as a cofactor. Mn(2+) serves as cofactor.

The protein localises to the cytoplasm. It carries out the reaction Mo-molybdopterin + GTP + H(+) = Mo-molybdopterin guanine dinucleotide + diphosphate. Transfers a GMP moiety from GTP to Mo-molybdopterin (Mo-MPT) cofactor (Moco or molybdenum cofactor) to form Mo-molybdopterin guanine dinucleotide (Mo-MGD) cofactor. Is also involved in the biosynthesis of the bis-MGD form of the Moco cofactor (Mo-bisMGD) in which the metal is symmetrically ligated by the dithiolene groups of two MGD molecules. Is necessary and sufficient for the in vitro activation of the DMSOR molybdoenzyme that uses the Mo-bisMGD form of molybdenum cofactor, which implies formation and efficient insertion of the cofactor into the enzyme without the need of a chaperone. Is specific for GTP since other nucleotides such as ATP and GMP cannot be utilized. The polypeptide is Molybdenum cofactor guanylyltransferase (mobA) (Escherichia coli (strain K12)).